We begin with the raw amino-acid sequence, 500 residues long: Cytochrome c-552 (500 aa).

A signal peptide spans 1–24 (MKFLIKSLAVATISILGCLQTALA). 10 residues coordinate heme c: histidine 102, cysteine 130, cysteine 133, lysine 134, cysteine 168, cysteine 171, histidine 172, cysteine 217, cysteine 220, and histidine 221. Ca(2+) is bound by residues glutamate 223, tyrosine 224, lysine 268, and glutamine 270. Tyrosine 224 lines the substrate pocket. Histidine 271 contributes to the substrate binding site. Heme c is bound by residues histidine 282, cysteine 289, cysteine 292, histidine 293, histidine 308, cysteine 321, cysteine 324, histidine 325, and histidine 400. A disordered region spans residues 477–500 (ARAKGLLPAEEADKPVAAPKAEAK).

This sequence belongs to the cytochrome c-552 family. Requires Ca(2+) as cofactor. It depends on heme c as a cofactor.

Its subcellular location is the periplasm. It catalyses the reaction 6 Fe(III)-[cytochrome c] + NH4(+) + 2 H2O = 6 Fe(II)-[cytochrome c] + nitrite + 8 H(+). Its pathway is nitrogen metabolism; nitrate reduction (assimilation). In terms of biological role, catalyzes the reduction of nitrite to ammonia, consuming six electrons in the process. The protein is Cytochrome c-552 of Mannheimia haemolytica (Pasteurella haemolytica).